The following is a 477-amino-acid chain: Trigger factor (477 aa).

The PPIase FKBP-type domain maps to 169-254 (EDRVTIDYLG…VKEVAKPNEL (86 aa)). Residues 435-477 (VSKEELTAEDEDAASEAKPAKKAAAKKKAAPKKKAEEGKSEEA) are disordered. A compositionally biased stretch (basic residues) spans 454 to 466 (AKKAAAKKKAAPK). Residues 467–477 (KKAEEGKSEEA) show a composition bias toward basic and acidic residues.

The protein belongs to the FKBP-type PPIase family. Tig subfamily.

It localises to the cytoplasm. The enzyme catalyses [protein]-peptidylproline (omega=180) = [protein]-peptidylproline (omega=0). Functionally, involved in protein export. Acts as a chaperone by maintaining the newly synthesized protein in an open conformation. Functions as a peptidyl-prolyl cis-trans isomerase. This chain is Trigger factor (tig), found in Brucella melitensis biotype 1 (strain ATCC 23456 / CCUG 17765 / NCTC 10094 / 16M).